The following is a 422-amino-acid chain: Sphingomyelin phosphodiesterase 2 (422 aa).

Position 49 (Glu-49) interacts with Mg(2+). His-272 acts as the Proton acceptor in catalysis. A run of 2 helical transmembrane segments spans residues 325-345 (ALFG…CVLA) and 354-374 (AIML…VYLF). Residues 397–422 (TETQDLGSEPHPTHCRQQEADRAEEK) are disordered. Residues 412–422 (RQQEADRAEEK) are compositionally biased toward basic and acidic residues.

This sequence belongs to the neutral sphingomyelinase family. Mg(2+) serves as cofactor.

It is found in the membrane. It catalyses the reaction a sphingomyelin + H2O = phosphocholine + an N-acylsphing-4-enine + H(+). It carries out the reaction 1-O-octadecyl-sn-glycero-3-phosphocholine + H2O = 1-O-octadecyl-sn-glycerol + phosphocholine + H(+). The catalysed reaction is an N-(acyl)-sphingosylphosphocholine + H2O = an N-acyl-sphingoid base + phosphocholine + H(+). The enzyme catalyses 1-hexadecanoyl-sn-glycero-3-phosphocholine + H2O = 1-hexadecanoyl-sn-glycerol + phosphocholine + H(+). It catalyses the reaction a sphingosylphosphocholine + H2O = a sphingoid base + phosphocholine + H(+). It carries out the reaction 1-O-hexadecyl-sn-glycero-3-phosphocholine + H2O = 1-O-hexadecyl-sn-glycerol + phosphocholine + H(+). Its pathway is lipid metabolism; sphingolipid metabolism. In terms of biological role, catalyzes the hydrolysis of sphingomyelin to form ceramide and phosphocholine. Ceramide mediates numerous cellular functions, such as apoptosis and growth arrest, and is capable of regulating these 2 cellular events independently. Also hydrolyzes sphingosylphosphocholine. Hydrolyze 1-acyl-2-lyso-sn-glycero-3-phosphocholine (lyso-PC) and 1-O-alkyl-2-lyso-sn-glycero-3-phosphocholine (lyso-platelet-activating factor). This chain is Sphingomyelin phosphodiesterase 2 (Smpd2), found in Rattus norvegicus (Rat).